We begin with the raw amino-acid sequence, 414 residues long: Putative F-box/kelch-repeat protein At2g29800 (414 aa).

The tract at residues methionine 1 to arginine 61 is disordered. The segment covering lysine 20–glutamine 35 has biased composition (basic and acidic residues). Over residues asparagine 40 to glutamate 54 the composition is skewed to acidic residues. In terms of domain architecture, F-box spans proline 58–leucine 105. Kelch repeat units lie at residues lysine 163 to glycine 211, arginine 212 to valine 258, lysine 263 to valine 302, and leucine 305 to alanine 349.

This is Putative F-box/kelch-repeat protein At2g29800 from Arabidopsis thaliana (Mouse-ear cress).